The following is a 125-amino-acid chain: SKP1-like protein 7 (125 aa).

The interval 94–125 (MNAAYDLHIKSLLALAYQTVADMVNDNKWAFE) is interaction with the F-box domain of F-box proteins.

Belongs to the SKP1 family. As to quaternary structure, part of a SCF (SKP1-cullin-F-box) protein ligase complex. Restricted to siliques.

Its subcellular location is the nucleus. It functions in the pathway protein modification; protein ubiquitination. In terms of biological role, involved in ubiquitination and subsequent proteasomal degradation of target proteins. Together with CUL1, RBX1 and a F-box protein, it forms a SCF E3 ubiquitin ligase complex. The functional specificity of this complex depends on the type of F-box protein. In the SCF complex, it serves as an adapter that links the F-box protein to CUL1. This chain is SKP1-like protein 7 (ASK7), found in Arabidopsis thaliana (Mouse-ear cress).